The chain runs to 749 residues: 1,4-alpha-glucan branching enzyme GlgB (749 aa).

Aspartate 427 acts as the Nucleophile in catalysis. Catalysis depends on glutamate 480, which acts as the Proton donor.

The protein belongs to the glycosyl hydrolase 13 family. GlgB subfamily. Monomer.

The catalysed reaction is Transfers a segment of a (1-&gt;4)-alpha-D-glucan chain to a primary hydroxy group in a similar glucan chain.. It functions in the pathway glycan biosynthesis; glycogen biosynthesis. Catalyzes the formation of the alpha-1,6-glucosidic linkages in glycogen by scission of a 1,4-alpha-linked oligosaccharide from growing alpha-1,4-glucan chains and the subsequent attachment of the oligosaccharide to the alpha-1,6 position. The protein is 1,4-alpha-glucan branching enzyme GlgB of Thermobifida fusca (strain YX).